The chain runs to 187 residues: GTP cyclohydrolase 1 (187 aa).

Residues Cys76, His79, and Cys148 each contribute to the Zn(2+) site.

Belongs to the GTP cyclohydrolase I family. In terms of assembly, toroid-shaped homodecamer, composed of two pentamers of five dimers.

The catalysed reaction is GTP + H2O = 7,8-dihydroneopterin 3'-triphosphate + formate + H(+). Its pathway is cofactor biosynthesis; 7,8-dihydroneopterin triphosphate biosynthesis; 7,8-dihydroneopterin triphosphate from GTP: step 1/1. This is GTP cyclohydrolase 1 from Streptococcus thermophilus (strain CNRZ 1066).